The following is a 504-amino-acid chain: Xylose import ATP-binding protein XylG (504 aa).

2 ABC transporter domains span residues 6 to 243 and 262 to 504; these read LEMQ…VGRE and VRNF…TGGK. Position 38–45 (38–45) interacts with ATP; the sequence is GENGAGKS.

Belongs to the ABC transporter superfamily. Xylose importer (TC 3.A.1.2.4) family. In terms of assembly, the complex is composed of two ATP-binding proteins (XylG), two transmembrane proteins (XylH) and a solute-binding protein (XylF).

It is found in the cell membrane. The catalysed reaction is D-xylose(out) + ATP + H2O = D-xylose(in) + ADP + phosphate + H(+). Part of the ABC transporter complex XylFGH involved in xylose import. Responsible for energy coupling to the transport system. In Moorella thermoacetica (strain ATCC 39073 / JCM 9320), this protein is Xylose import ATP-binding protein XylG.